Here is a 209-residue protein sequence, read N- to C-terminus: MTEFSIGRSEIAGVVLAGGRSQRMGRDKAGAMLGAESLLRHVLTRLSQQVLPVAVNADAAAEDVPVIPDRFRGKAGPLAGIHAAMVYAAGLPGITHVVTVSVDCPFFPADLVARLAAALERQSQIAIAASEGRSHPVFGLWPVTLAADLEAWMVTDEKRRVRDFLLRHDVTEVTFPLHPTRASLLDPFFNINTPDDLAEAERWLEALRA.

GTP contacts are provided by residues 16-18, K28, N56, D69, and D103; that span reads LAG. D103 contacts Mg(2+).

This sequence belongs to the MobA family. As to quaternary structure, monomer. Requires Mg(2+) as cofactor.

Its subcellular location is the cytoplasm. The enzyme catalyses Mo-molybdopterin + GTP + H(+) = Mo-molybdopterin guanine dinucleotide + diphosphate. Functionally, transfers a GMP moiety from GTP to Mo-molybdopterin (Mo-MPT) cofactor (Moco or molybdenum cofactor) to form Mo-molybdopterin guanine dinucleotide (Mo-MGD) cofactor. This is Molybdenum cofactor guanylyltransferase from Rhizobium leguminosarum bv. trifolii (strain WSM2304).